Reading from the N-terminus, the 144-residue chain is NADH dehydrogenase [ubiquinone] 1 alpha subcomplex subunit 13 (144 aa).

At Ala-2 the chain carries N-acetylalanine. A helical membrane pass occupies residues 30 to 51 (LSGYSMLAIGIGTLIYGHWSIM). The interval 102 to 144 (PDWKVGESVFHTTRWVPPLIGELYGLRTTEEALHASHGFMWYT) is important for inducing cell death.

It belongs to the complex I NDUFA13 subunit family. As to quaternary structure, complex I is composed of 45 different subunits. Interacts with CARD15, but not with CARD4. Interacts with STAT3, but not with STAT1, STAT2 and STAT5A. Interacts with OLFM4. (Microbial infection) Interacts with HHV-8 IRF1, in the nucleus, with HPV-16 E6 and SV40 LT. In terms of tissue distribution, widely expressed, with highest expression in heart, skeletal muscle, liver, kidney and placenta. In intestinal mucosa, down-regulated in areas involved in Crohn disease and ulcerative colitis.

Its subcellular location is the mitochondrion inner membrane. The protein resides in the nucleus. Its function is as follows. Accessory subunit of the mitochondrial membrane respiratory chain NADH dehydrogenase (Complex I), that is believed not to be involved in catalysis. Complex I functions in the transfer of electrons from NADH to the respiratory chain. The immediate electron acceptor for the enzyme is believed to be ubiquinone. Involved in the interferon/all-trans-retinoic acid (IFN/RA) induced cell death. This apoptotic activity is inhibited by interaction with viral IRF1. Prevents the transactivation of STAT3 target genes. May play a role in CARD15-mediated innate mucosal responses and serve to regulate intestinal epithelial cell responses to microbes. This Homo sapiens (Human) protein is NADH dehydrogenase [ubiquinone] 1 alpha subcomplex subunit 13 (NDUFA13).